The following is a 907-amino-acid chain: Lateral signaling target protein 2 homolog (907 aa).

5 disordered regions span residues 339–395, 463–604, 662–688, 716–756, and 770–834; these read SSDN…DPAN, LTDS…SGDA, NSSPPEPEDPPEPAANSTDKPKEPDPA, EVNA…SENG, and GSGG…EERR. A compositionally biased stretch (polar residues) spans 351-361; the sequence is DISSFYTSNNR. Residues 367–393 show a composition bias toward acidic residues; sequence EPNEDDDVSESNDEDEDEGEEVDEDDP. Composition is skewed to polar residues over residues 463 to 475 and 486 to 495; these read LTDSGLGTANPSL and PVTSSHPIAQ. Acidic residues predominate over residues 501–516; that stretch reads SEEEGEVDEYDEDDSE. Positions 525-549 are enriched in basic residues; it reads HHTKHQRRHRHHHHHHRKHYSKHRS. The span at 550–565 shows a compositional bias: low complexity; the sequence is SAAGSAGTSGTTCSAA. Residues 568–580 are compositionally biased toward polar residues; it reads QISSCDTSPSSGG. Residues 592-602 are compositionally biased toward gly residues; sequence GSSGNSSGGSG. A compositionally biased stretch (polar residues) spans 742–751; it reads APRTMMTTAA. The segment covering 777–793 has biased composition (low complexity); it reads GSSRSSQERSVSLSETS. The segment covering 816-826 has biased composition (polar residues); it reads PKSVQSEQSGQ. Residues 845-905 form an FYVE-type zinc finger; sequence DGDAPRCMAC…VCRECFVREV (61 aa). Residues cysteine 851, cysteine 854, cysteine 867, cysteine 870, cysteine 875, cysteine 878, cysteine 897, and cysteine 900 each coordinate Zn(2+).

This sequence belongs to the lst-2 family.

In terms of biological role, negative regulator of epidermal growth factor receptor (EGFR) signaling. This chain is Lateral signaling target protein 2 homolog, found in Culex quinquefasciatus (Southern house mosquito).